The following is a 509-amino-acid chain: ATP synthase subunit alpha (509 aa).

169–176 (GDRQTGKT) contributes to the ATP binding site.

Belongs to the ATPase alpha/beta chains family. F-type ATPases have 2 components, CF(1) - the catalytic core - and CF(0) - the membrane proton channel. CF(1) has five subunits: alpha(3), beta(3), gamma(1), delta(1), epsilon(1). CF(0) has three main subunits: a(1), b(2) and c(9-12). The alpha and beta chains form an alternating ring which encloses part of the gamma chain. CF(1) is attached to CF(0) by a central stalk formed by the gamma and epsilon chains, while a peripheral stalk is formed by the delta and b chains.

It localises to the cell inner membrane. The enzyme catalyses ATP + H2O + 4 H(+)(in) = ADP + phosphate + 5 H(+)(out). Its function is as follows. Produces ATP from ADP in the presence of a proton gradient across the membrane. The alpha chain is a regulatory subunit. The sequence is that of ATP synthase subunit alpha from Brucella suis biovar 1 (strain 1330).